Reading from the N-terminus, the 169-residue chain is Protein-export protein SecB (169 aa).

Belongs to the SecB family. Homotetramer, a dimer of dimers. One homotetramer interacts with 1 SecA dimer.

It is found in the cytoplasm. Its function is as follows. One of the proteins required for the normal export of preproteins out of the cell cytoplasm. It is a molecular chaperone that binds to a subset of precursor proteins, maintaining them in a translocation-competent state. It also specifically binds to its receptor SecA. The chain is Protein-export protein SecB from Pseudoalteromonas atlantica (strain T6c / ATCC BAA-1087).